The following is a 181-amino-acid chain: Anthrone oxygenase encC (181 aa).

4 helical membrane passes run 1–21 (MASV…WLSG), 65–81 (QIAA…AWCA), 88–108 (LLYG…LLFM), and 153–173 (FLAG…LFAA).

This sequence belongs to the anthrone oxygenase family. Endocrocin is specifically produced in conidia.

The protein resides in the membrane. In terms of biological role, anthrone oxygenase; part of the gene cluster that mediates the biosynthesis of endocrocin, a simple anthraquinone interesting for many biotechnological applications. The pathway begins with the synthesis of atrochrysone thioester by the polyketide synthase (PKS) encA. The atrochrysone carboxyl ACP thioesterase encB then breaks the thioester bond and releases the atrochrysone carboxylic acid from encA. The atrochrysone carboxylic acid is then converted to endocrocin anthrone which is further oxidized into endocrocin by the anthrone oxygenase encC. The exact function of encD has not been identified yet, but it negatively regulates endocrocin production, likely through the modification of endocrocin itself. This Aspergillus fumigatus (strain ATCC MYA-4609 / CBS 101355 / FGSC A1100 / Af293) (Neosartorya fumigata) protein is Anthrone oxygenase encC.